A 116-amino-acid chain; its full sequence is Iron-sulfur cluster insertion protein ErpA (116 aa).

The iron-sulfur cluster site is built by Cys44, Cys108, and Cys110.

Belongs to the HesB/IscA family. In terms of assembly, homodimer. Iron-sulfur cluster is required as a cofactor.

Its function is as follows. Required for insertion of 4Fe-4S clusters for at least IspG. The protein is Iron-sulfur cluster insertion protein ErpA of Ectopseudomonas mendocina (strain ymp) (Pseudomonas mendocina).